The sequence spans 1036 residues: DNA-directed RNA polymerase subunit beta (1036 aa).

It belongs to the RNA polymerase beta chain family. In plastids the minimal PEP RNA polymerase catalytic core is composed of four subunits: alpha, beta, beta', and beta''. When a (nuclear-encoded) sigma factor is associated with the core the holoenzyme is formed, which can initiate transcription.

The protein localises to the plastid. It is found in the chloroplast. It catalyses the reaction RNA(n) + a ribonucleoside 5'-triphosphate = RNA(n+1) + diphosphate. Functionally, DNA-dependent RNA polymerase catalyzes the transcription of DNA into RNA using the four ribonucleoside triphosphates as substrates. The sequence is that of DNA-directed RNA polymerase subunit beta from Cyanidioschyzon merolae (strain NIES-3377 / 10D) (Unicellular red alga).